A 90-amino-acid chain; its full sequence is Phosphocarrier protein HPr (90 aa).

Residues 1–89 (MPALEITIIN…ELINNRFDEG (89 aa)) enclose the HPr domain. The active-site Pros-phosphohistidine intermediate is His15.

This sequence belongs to the HPr family.

It is found in the cytoplasm. Its function is as follows. General (non sugar-specific) component of the phosphoenolpyruvate-dependent sugar phosphotransferase system (sugar PTS). This major carbohydrate active-transport system catalyzes the phosphorylation of incoming sugar substrates concomitantly with their translocation across the cell membrane. The phosphoryl group from phosphoenolpyruvate (PEP) is transferred to the phosphoryl carrier protein HPr by enzyme I. Phospho-HPr then transfers it to the PTS EIIA domain. The chain is Phosphocarrier protein HPr (ptsH) from Pseudomonas aeruginosa (strain ATCC 15692 / DSM 22644 / CIP 104116 / JCM 14847 / LMG 12228 / 1C / PRS 101 / PAO1).